The primary structure comprises 215 residues: Secretory component protein psh3 (215 aa).

The Cytoplasmic segment spans residues 1 to 21; the sequence is MAKRSIFRFADEKGLKVAARY. The chain crosses the membrane as a helical span at residues 22–42; that stretch reads GVLMSTSFIFALLFHSSVADV. Topologically, residues 43–67 are extracellular; that stretch reads NTLWSPGPESAFDAAETYYTLVAGS. A helical membrane pass occupies residues 68 to 88; it reads HFIVKYTVYTIMGLNMIFHLI. Residues 89-105 are Cytoplasmic-facing; the sequence is QATGAKGDDKLFFYSST. Residues 106 to 126 traverse the membrane as a helical segment; that stretch reads LLYLTALILFIVNVAPSMLVV. Topologically, residues 127-147 are extracellular; the sequence is KLQNYVQFPRNMHLSVLAASH. A helical membrane pass occupies residues 148-168; that stretch reads VLVEFLLAGVILIQLGYVFGY. The Cytoplasmic portion of the chain corresponds to 169 to 215; it reads HVQSIQQREYAEDMREQELAEKAKLESESATTQSVETVSTESVSKRK. The tract at residues 190 to 215 is disordered; it reads KAKLESESATTQSVETVSTESVSKRK. The span at 196-215 shows a compositional bias: low complexity; sequence ESATTQSVETVSTESVSKRK.

It to yeast SHR3. As to quaternary structure, monomer.

Its subcellular location is the endoplasmic reticulum membrane. Functionally, involved in amino acid permease processing and required for the efficient translocation of structurally related amino acid permeases from the endoplasmic reticulum to the plasma membrane. The sequence is that of Secretory component protein psh3 (psh3) from Schizosaccharomyces pombe (strain 972 / ATCC 24843) (Fission yeast).